Here is a 314-residue protein sequence, read N- to C-terminus: Homoserine kinase (314 aa).

Position 95-105 (95-105 (PHSRGLGSSAA)) interacts with ATP.

This sequence belongs to the GHMP kinase family. Homoserine kinase subfamily.

The protein localises to the cytoplasm. The enzyme catalyses L-homoserine + ATP = O-phospho-L-homoserine + ADP + H(+). The protein operates within amino-acid biosynthesis; L-threonine biosynthesis; L-threonine from L-aspartate: step 4/5. Its function is as follows. Catalyzes the ATP-dependent phosphorylation of L-homoserine to L-homoserine phosphate. The sequence is that of Homoserine kinase from Mycolicibacterium vanbaalenii (strain DSM 7251 / JCM 13017 / BCRC 16820 / KCTC 9966 / NRRL B-24157 / PYR-1) (Mycobacterium vanbaalenii).